Consider the following 502-residue polypeptide: Inosine-5'-monophosphate dehydrogenase 2 (502 aa).

Position 2 is an N-acetylserine (Ser-2). In terms of domain architecture, CBS spans 166 to 225 (MKSCENKDYYVPWDIDLDKIEAVLEDKQKGFVVLEKEGETVNVVTKDDVERVKGYPKLGS). NAD(+) contacts are provided by residues 264 to 266 (DSS) and 314 to 316 (GMG). Residues Gly-316 and Gly-318 each contribute to the K(+) site. Ser-319 contacts IMP. Position 321 (Cys-321) interacts with K(+). Cys-321 functions as the Thioimidate intermediate in the catalytic mechanism. Residues 354-356 (DGG), 377-378 (GS), and 401-405 (YRGMG) each bind IMP. Arg-417 (proton acceptor) is an active-site residue. IMP is bound at residue Gln-429. Glu-488, Gly-489, and Gly-490 together coordinate K(+).

It belongs to the IMPDH/GMPR family. In terms of assembly, homotetramer. The cofactor is K(+).

The protein resides in the cytoplasm. The catalysed reaction is IMP + NAD(+) + H2O = XMP + NADH + H(+). The protein operates within purine metabolism; XMP biosynthesis via de novo pathway; XMP from IMP: step 1/1. With respect to regulation, mycophenolic acid (MPA) is a non-competitive inhibitor that prevents formation of the closed enzyme conformation by binding to the same site as the amobile flap. In contrast, mizoribine monophosphate (MZP) is a competitive inhibitor that induces the closed conformation. MPA is a potent inhibitor of mammalian IMPDHs but a poor inhibitor of the bacterial enzymes. MZP is a more potent inhibitor of bacterial IMPDH. Functionally, catalyzes the conversion of inosine 5'-phosphate (IMP) to xanthosine 5'-phosphate (XMP), the first committed and rate-limiting step in the de novo synthesis of guanine nucleotides, and therefore plays an important role in the regulation of cell growth. The protein is Inosine-5'-monophosphate dehydrogenase 2 of Arabidopsis thaliana (Mouse-ear cress).